We begin with the raw amino-acid sequence, 1522 residues long: Sodium channel protein 1 brain (1522 aa).

Residues 1–50 (MDEKYTAKNRDKTFVVIEKRFKKNIIHRFSAKRSLFLFTPRNPIRRLAVC) lie on the Cytoplasmic side of the membrane. The I repeat unit spans residues 41-342 (RNPIRRLAVC…VATAYELEVK (302 aa)). A helical transmembrane segment spans residues 51–70 (IATNVCFDYFLMFTIMINCV). Topologically, residues 71 to 77 (FLAMPDI) are extracellular. Residues 78 to 99 (SEFAEYIFLGIYTMEMAIKLVA) traverse the membrane as a helical segment. Over 100–112 (GGFFIDKYTYLRD) the chain is Cytoplasmic. A helical membrane pass occupies residues 113–134 (AWNCLDFTVIMISYITLLLQTI). The Extracellular portion of the chain corresponds to 135–143 (NDKVISDIT). A helical; Voltage-sensor transmembrane segment spans residues 144 to 167 (GLRTFRVLRALRTLSIIPGLKTMV). Topologically, residues 168–179 (NALLRALRMLIS) are cytoplasmic. The chain crosses the membrane as a helical span at residues 180-201 (VLILILFCLWIFSQAGVQLFGG). Residues 202-278 (ALRHKCVLQI…PNYGYTNFDS (77 aa)) lie on the Extracellular side of the membrane. Cysteines 207 and 255 form a disulfide. Asn248 and Asn258 each carry an N-linked (GlcNAc...) asparagine glycan. An intramembrane region (pore-forming) is located at residues 279 to 303 (IGWSMLISFQLLTQDYWEDVYNKVI). The Extracellular segment spans residues 304 to 308 (RAHSP). A helical membrane pass occupies residues 309 to 331 (WTVIYFIVINFFGSLYLMNLMLA). The Cytoplasmic portion of the chain corresponds to 332–406 (VVATAYELEV…WLRVQSFAHC (75 aa)). One copy of the II repeat lies at 393-647 (CYNPWLRVQS…EQEVEVSSFA (255 aa)). Residues 407–426 (IITDSFTEVFIIFIIVLNTV) traverse the membrane as a helical segment. Residues 427 to 442 (FLAMEHHGMSMELKNV) lie on the Extracellular side of the membrane. The helical transmembrane segment at 443-464 (LKVANYVFTTVFVLEAILKLLA) threads the bilayer. The Cytoplasmic segment spans residues 465 to 472 (FNKQYFKS). The helical transmembrane segment at 473–491 (GWNICDLVVVVASLIDLGV) threads the bilayer. Residues 492–498 (EGLKGVS) lie on the Extracellular side of the membrane. A helical; Voltage-sensor transmembrane segment spans residues 499–522 (VFRSFRLLRVFHLAQSWTTMRLLL). The Cytoplasmic portion of the chain corresponds to 523–531 (CIILNTLGS). The helical transmembrane segment at 532–553 (LGYLTIILIIVIYIFAVTGLQL) threads the bilayer. Residues 554–575 (FHTEYTPDKFRGEPVPRWNFND) are Extracellular-facing. Positions 576-596 (FLHSFMMVFRILCGEWIEPMY) form an intramembrane region, pore-forming. Topologically, residues 597–607 (DCMRACNGLCF) are extracellular. Residues Cys598 and Cys606 are joined by a disulfide bond. Residues 608 to 628 (LIFIPVTVFGKTLFFLFIGLV) form a helical membrane-spanning segment. The Cytoplasmic portion of the chain corresponds to 629 to 777 (LGAFGSDTVE…WNNFRRQLMM (149 aa)). The III repeat unit spans residues 770 to 1074 (NFRRQLMMVC…QNYYNTLKKL (305 aa)). Residues 778–797 (VCENKYFETGVLVIIFASSI) form a helical membrane-spanning segment. The Extracellular portion of the chain corresponds to 798–815 (LLAFEDIYLNEKPRLKLA). A helical membrane pass occupies residues 816–837 (IFYLDITFCLLFFLEMVLKLVA). Residues 838–846 (LGFVHYYTH) lie on the Cytoplasmic side of the membrane. Residues 847 to 868 (FWTILDFTIVIITVISLAASGL) traverse the membrane as a helical segment. At 869–874 (GMEQIT) the chain is on the extracellular side. A helical; Voltage-sensor membrane pass occupies residues 875-898 (AFRSLRTLRALRPLRAVSRWQGMK). At 899–915 (IIVNALMLSIPSIFNVL) the chain is on the cytoplasmic side. The chain crosses the membrane as a helical span at residues 916 to 937 (LVCVVFWLIFAIMGVQLFAGKF). Residues 938 to 976 (YKCVNETNMRIPPTEVANKIECYNKNYTWVNSNVNFDNV) are Extracellular-facing. 2 N-linked (GlcNAc...) asparagine glycosylation sites follow: Asn942 and Asn963. The pore-forming intramembrane region spans 977 to 998 (GGAFLALFQVATFEGWMEIMAD). Residues 999–1009 (AVDVTEVDEQP) are Extracellular-facing. A helical transmembrane segment spans residues 1010-1022 (KFEATVYYYFYFV). Topologically, residues 1023-1100 (LFIIFGSFFV…QAVVYDLVMS (78 aa)) are cytoplasmic. The residue at position 1076 (Thr1076) is a Phosphothreonine; by PKC. An IV repeat occupies 1083–1386 (VKRPKNKCQA…WEQYDPLATQ (304 aa)). The helical transmembrane segment at 1101-1120 (NQFEIFITTIIITNMIFMAF) threads the bilayer. The Extracellular segment spans residues 1121–1132 (EHYNQSEVVTEV). Asn1124 carries N-linked (GlcNAc...) asparagine glycosylation. The chain crosses the membrane as a helical span at residues 1133-1154 (LATANIAFTILYAVEAIIKIIG). The Cytoplasmic portion of the chain corresponds to 1155 to 1162 (LRIHYLRN). Residues 1163–1184 (LWNVFDFLVVTLSVMDAFLNDI) form a helical membrane-spanning segment. At 1185–1194 (FGDGIFMNPS) the chain is on the extracellular side. Residues 1195 to 1218 (LLRVARMFRIGRIIRLIKWAKGMR) form a helical; Voltage-sensor membrane-spanning segment. The Cytoplasmic segment spans residues 1219-1236 (KLLFALVISLPALFNIGA). The chain crosses the membrane as a helical span at residues 1237–1258 (LLMLVMFIYTIIGMSSFGQIKL). Topologically, residues 1259 to 1270 (SGALNDQVNFQT) are extracellular. An intramembrane region (pore-forming) is located at residues 1271 to 1293 (FGKTFLLLVRLATSAGWNDILGP). Topologically, residues 1294–1323 (LLIQPPNCDPNYITTSTGEKIKVVNGDCGM) are extracellular. Residues 1324 to 1346 (PWLAISYMVSYIIIVFMIVFNMY) traverse the membrane as a helical segment. Residues 1347-1522 (IAVILENFNQ…FIISAPETAV (176 aa)) are Cytoplasmic-facing.

It belongs to the sodium channel (TC 1.A.1.10) family.

The protein resides in the cell membrane. Its function is as follows. Mediates the voltage-dependent sodium ion permeability of excitable membranes. Assuming opened or closed conformations in response to the voltage difference across the membrane, the protein forms a sodium-selective channel through which Na(+) ions may pass in accordance with their electrochemical gradient. This is Sodium channel protein 1 brain from Heterololigo bleekeri (Spear squid).